The sequence spans 60 residues: Myrmicitoxin(1)-Pr4c (60 aa).

Residues 1 to 23 form the signal peptide; sequence MKAIIFLFAVLTVVAIIIPIISG. A propeptide spanning residues 24–33 is cleaved from the precursor; it reads EPNAGPHAAS. Position 59 is a glutamine amide (Gln-59).

It belongs to the formicidae venom clade 2 family. As to expression, expressed by the venom gland.

The protein resides in the secreted. In terms of biological role, toxin that causes a rapid and irreversible paralysis when intrathoracically injected into insects (blowflies). Does not cause spontaneous nocifensive behaviors by intraplantar injection in mice. The sequence is that of Myrmicitoxin(1)-Pr4c from Pogonomyrmex rugosus (Desert harvester ant).